Reading from the N-terminus, the 226-residue chain is Late expression factor 7 (226 aa).

The F-box domain occupies 9 to 58 (RAKRIRLPLEIIDTILQYLDPILHAKVVGLTTRVKCRLLRDNNVEDYLKL).

Interacts with host S-phase kinase-associated protein 1/SKP1.

Its subcellular location is the host nucleus. Its pathway is protein degradation; proteasomal ubiquitin-dependent pathway. F-box protein that manipulates the host DNA damage response (DRR) in order to promote viral multiplication. Acts as a substrate recognition component of SKP1/Cullin/F-box (SCF) complexes for targeted protein polyubiquitination. The protein is Late expression factor 7 (LEF-7) of Lepidoptera (butterflies and moths).